A 987-amino-acid chain; its full sequence is KAT8 regulatory NSL complex subunit 1-like protein (987 aa).

Lys-134 is covalently cross-linked (Glycyl lysine isopeptide (Lys-Gly) (interchain with G-Cter in SUMO2)). Phosphoserine is present on Ser-462. Residues 708–738 (RKKRHLSETALGERTKLEESDFQHTESGSHS) form a disordered region. The segment covering 718–731 (LGERTKLEESDFQH) has biased composition (basic and acidic residues). Residues 794–915 (EILTPSWRMV…QSQETKSLWW (122 aa)) form the PEHE domain. Lys-859 is modified (N6-acetyllysine). A disordered region spans residues 949–972 (GEIFGTSVPENGHHPKKQSDGMEE). Over residues 959–972 (NGHHPKKQSDGMEE) the composition is skewed to basic and acidic residues.

Acetylated on lysine residues by KAT8 upon ionizing radiation-induced DNA damage; deacetylated by HDAC3.

The chain is KAT8 regulatory NSL complex subunit 1-like protein (KANSL1L) from Homo sapiens (Human).